The sequence spans 377 residues: Glutamate 5-kinase (377 aa).

Residue Lys-22 participates in ATP binding. Ser-62, Asp-149, and Asn-161 together coordinate substrate. Residues Thr-181–Asp-182 and Thr-223–Lys-229 contribute to the ATP site. A PUA domain is found at Gln-285–Phe-359.

The protein belongs to the glutamate 5-kinase family.

The protein localises to the cytoplasm. It catalyses the reaction L-glutamate + ATP = L-glutamyl 5-phosphate + ADP. The protein operates within amino-acid biosynthesis; L-proline biosynthesis; L-glutamate 5-semialdehyde from L-glutamate: step 1/2. Catalyzes the transfer of a phosphate group to glutamate to form L-glutamate 5-phosphate. This is Glutamate 5-kinase from Bifidobacterium adolescentis (strain ATCC 15703 / DSM 20083 / NCTC 11814 / E194a).